The following is a 236-amino-acid chain: Phosphoribosylaminoimidazole-succinocarboxamide synthase (236 aa).

This sequence belongs to the SAICAR synthetase family.

The catalysed reaction is 5-amino-1-(5-phospho-D-ribosyl)imidazole-4-carboxylate + L-aspartate + ATP = (2S)-2-[5-amino-1-(5-phospho-beta-D-ribosyl)imidazole-4-carboxamido]succinate + ADP + phosphate + 2 H(+). The protein operates within purine metabolism; IMP biosynthesis via de novo pathway; 5-amino-1-(5-phospho-D-ribosyl)imidazole-4-carboxamide from 5-amino-1-(5-phospho-D-ribosyl)imidazole-4-carboxylate: step 1/2. This chain is Phosphoribosylaminoimidazole-succinocarboxamide synthase, found in Campylobacter jejuni subsp. doylei (strain ATCC BAA-1458 / RM4099 / 269.97).